Here is a 434-residue protein sequence, read N- to C-terminus: MKLFGLFLSFTLLFLCPFISQADVPELSRQPPRPIVFVHNDRSKSDPQQVHISLAGKDHMRVTFITEDNKVESVVEYGKQPGKYDGKATGECTSYKYFFYKSGKIHHVKIGPLQANTTYYYRCGGNGPEFSFKTPPSTFPVEFAIVGDLGQTEWTAATLSHINSQDYDVFLLPGDLSYADTHQPLWDSFGRLVEPLASKRPWMVTEGNHEIEFFPIIEHTTFKSYNARWLMPHTESFSTSNLYYSFDVAGVHTVMLGSYTDFDCESDQYQWLQADLAKVDRKTTPWVVVLLHAPWYNTNEAHEGEGESMREAMESLLFNARVDVVFSGHVHAYERFKRVYNNKADPCGPIHITIGDGGNREGLALSFKKPPSPLSEFRESSFGHGRLKVMDGKRAHWSWHRNNDSNSLLADEVWLDSLSTSSSCWPSSRSNDEL.

The N-terminal stretch at 1–22 (MKLFGLFLSFTLLFLCPFISQA) is a signal peptide. The N-linked (GlcNAc...) asparagine glycan is linked to Asn-116. 3 residues coordinate Fe cation: Asp-148, Asp-175, and Tyr-178. Asp-175 serves as a coordination point for Zn(2+). Zn(2+)-binding residues include Asn-208 and His-292. Asn-208 serves as a coordination point for substrate. His-302 functions as the Proton donor in the catalytic mechanism. His-329 serves as a coordination point for Zn(2+). 329-331 (HVH) provides a ligand contact to substrate. Fe cation is bound at residue His-331. A glycan (N-linked (GlcNAc...) asparagine) is linked at Asn-403.

This sequence belongs to the metallophosphoesterase superfamily. Purple acid phosphatase family. Homodimer. Requires Fe cation as cofactor. Zn(2+) is required as a cofactor. Expressed in roots, stems, leaves, flowers and siliques.

Its subcellular location is the secreted. It catalyses the reaction a phosphate monoester + H2O = an alcohol + phosphate. The chain is Purple acid phosphatase 22 (PAP22) from Arabidopsis thaliana (Mouse-ear cress).